The following is a 338-amino-acid chain: Glycerol-3-phosphate dehydrogenase [NAD(P)+] (338 aa).

NADPH is bound by residues serine 14, tyrosine 15, histidine 35, and lysine 109. Sn-glycerol 3-phosphate contacts are provided by lysine 109, glycine 138, and threonine 140. An NADPH-binding site is contributed by alanine 142. Sn-glycerol 3-phosphate is bound by residues lysine 194, aspartate 247, serine 257, arginine 258, and asparagine 259. Lysine 194 functions as the Proton acceptor in the catalytic mechanism. Position 258 (arginine 258) interacts with NADPH. NADPH contacts are provided by valine 282 and glutamate 284.

It belongs to the NAD-dependent glycerol-3-phosphate dehydrogenase family.

It is found in the cytoplasm. It carries out the reaction sn-glycerol 3-phosphate + NAD(+) = dihydroxyacetone phosphate + NADH + H(+). It catalyses the reaction sn-glycerol 3-phosphate + NADP(+) = dihydroxyacetone phosphate + NADPH + H(+). Its pathway is membrane lipid metabolism; glycerophospholipid metabolism. In terms of biological role, catalyzes the reduction of the glycolytic intermediate dihydroxyacetone phosphate (DHAP) to sn-glycerol 3-phosphate (G3P), the key precursor for phospholipid synthesis. The sequence is that of Glycerol-3-phosphate dehydrogenase [NAD(P)+] from Shewanella frigidimarina (strain NCIMB 400).